A 418-amino-acid chain; its full sequence is Chromo domain-containing protein rhino (418 aa).

In terms of domain architecture, Chromo spans 24–74 (YVVEKILGKRFVNGRPQVLVKWSGFPNENNTWEPLENVGNCMKLVSDFESE). Low complexity-rich tracts occupy residues 84-99 (AKSV…SSGP) and 107-120 (SSSK…KSVQ). 2 disordered regions span residues 84–167 (AKSV…TDST) and 199–337 (PTKD…RCPR). The span at 131–143 (NQKKGKNIKKTAG) shows a compositional bias: basic residues. The span at 152–167 (PKTQMPSTSQVSTDST) shows a compositional bias: polar residues. Residues 218-228 (RLIEFPQREDA) show a composition bias toward basic and acidic residues. The span at 258-275 (GESSSSMSLPTVSSTSSE) shows a compositional bias: low complexity. The span at 276–285 (KSIKVTKSEP) shows a compositional bias: basic and acidic residues. The tract at residues 353–418 (TKPFGVNRGL…FESLRIIVPK (66 aa)) is required for interaction with del/deadlock.

Homodimer in solution. Dimerization is essential for chromatin binding. Component of the Rhino-Deadlock-Cutoff (RDC) complex, composed of rhi/rhino, del/deadlock and cuff/cutoff. Interacts (via C-terminus) with del/deadlock (via N-terminus); this interaction is direct. Two copies of del/deadlock associate with each rhi/rhino dimer. Interacts with cuff/cutoff; this interaction is indirect and is mediated by del/deadlock. Interacts (via Chromo domain) with kipf/kipferl (via C2H2 type zinc finger 4). Interacts (via Chromo domain) with His3/histone H3 (via N-terminus di- or tri-methylated on 'Lys-10' (H3K9me2/3)); this interaction is direct. Two His3 N-terminal tails oriented anti-parallel to each other are required for dimer binding to His3. Female specific, expressed in both somatic and germline cells but highly enriched in ovaries. In the germarium of the developing oocyte expressed in germline stem cells, cystoblasts and developing germline cysts. Expressed in nurse cells in the germarium and egg chamber.

The protein resides in the nucleus. It is found in the chromosome. Functionally, involved in piRNA (piwi-interacting RNA)-mediated transposon repression. May be involved in formation of the perinuclear nuage, a subcellular structure implicated in RNA processing that may be involved in transposon RNA surveillance and silencing. Required for ping-pong amplification during piRNA biogenesis, probably by promoting transcription of piRNA precursors. As part of the Rhino-Deadlock-Cutoff (RDC) Complex associates with, and drives non-canonical transcription of germline specific dual-strand piRNA clusters 80F, 38C and 42AB, but not single-stranded piRNA cluster 20A. Induction of piRNA expression is potentially achieved through a mechanism that prevents transcriptional termination and leads to readthrough from flanking transcription units. Recruited to specific chromatin regions by a combination of H3K9me2/3 histone methylation and differentially expressed sequence-specific recruitment factors. This association may involve direct interaction with DNA. Associates with chromatin upon exposure to homologous piRNA and facilitates transcriptional read-through. As part of the RDC complex, involved in suppression of splicing. In ovaries, recruitment to specific heterochromatin clusters is nucleated and stabilized by kipf/kipferl. During oogenesis, involved in axis specification and may regulate chromosome condensation at the onset of a mitotic-like phase that occurs during nurse cell chromosome duplication. Involved in the distribution of mRNAs for proteins that play a role in anterior-posterior and dorsal-ventral axes specification during development of the oocyte, including grk/gurken, osk/oskar and vas/vasa. Mitigates meiotic double strand breaks and interacts with DNA damage signaling to mediate axis specification. The chain is Chromo domain-containing protein rhino from Drosophila melanogaster (Fruit fly).